The following is a 119-amino-acid chain: Large ribosomal subunit protein P3 (119 aa).

Positions 81–119 are disordered; it reads GAAAGAASGGAAAEAPKAEEKKEEEKEESEDDLGFSLFD. A compositionally biased stretch (low complexity) spans 84-95; that stretch reads AGAASGGAAAEA.

It belongs to the eukaryotic ribosomal protein P1/P2 family. In terms of processing, phosphorylated.

Functionally, plays an important role in the elongation step of protein synthesis. The protein is Large ribosomal subunit protein P3 of Oryza sativa subsp. japonica (Rice).